Reading from the N-terminus, the 93-residue chain is Pyrimidine/purine nucleoside phosphorylase (93 aa).

This sequence belongs to the nucleoside phosphorylase PpnP family.

It carries out the reaction a purine D-ribonucleoside + phosphate = a purine nucleobase + alpha-D-ribose 1-phosphate. The enzyme catalyses adenosine + phosphate = alpha-D-ribose 1-phosphate + adenine. It catalyses the reaction cytidine + phosphate = cytosine + alpha-D-ribose 1-phosphate. The catalysed reaction is guanosine + phosphate = alpha-D-ribose 1-phosphate + guanine. It carries out the reaction inosine + phosphate = alpha-D-ribose 1-phosphate + hypoxanthine. The enzyme catalyses thymidine + phosphate = 2-deoxy-alpha-D-ribose 1-phosphate + thymine. It catalyses the reaction uridine + phosphate = alpha-D-ribose 1-phosphate + uracil. The catalysed reaction is xanthosine + phosphate = alpha-D-ribose 1-phosphate + xanthine. Its function is as follows. Catalyzes the phosphorolysis of diverse nucleosides, yielding D-ribose 1-phosphate and the respective free bases. Can use uridine, adenosine, guanosine, cytidine, thymidine, inosine and xanthosine as substrates. Also catalyzes the reverse reactions. This chain is Pyrimidine/purine nucleoside phosphorylase, found in Photobacterium profundum (strain SS9).